Here is a 2138-residue protein sequence, read N- to C-terminus: Protein virilizer homolog (2138 aa).

5 disordered regions span residues 1503–1574 (RLPQ…SMHV), 1638–1664 (NPTP…DDLQ), 1855–1881 (PVIP…SSGG), 2013–2035 (PMQP…QGVS), and 2058–2094 (YYHP…QESG). Over residues 1528–1541 (ENSSVDIPTQNSIQ) the composition is skewed to polar residues. 2 stretches are compositionally biased toward polar residues: residues 1862–1881 (DSLS…SSGG) and 2025–2035 (QISQPSEQGVS).

This sequence belongs to the vir family. Interacts with MTB, FIP37 and HAKAI. Associates with MTA, MTB, FIP37 and HAKAI to form the m6A writer complex which is essential for adenosine methylation at specific mRNA sequences.

The protein localises to the nucleus speckle. Its subcellular location is the nucleus. The protein resides in the nucleoplasm. Its function is as follows. Subunit of the N6-methyltransferase complex, a multiprotein complex that mediates N6-methyladenosine (m6A) methylation at the 5'-[AG]GAC-3' consensus sites of some mRNAs. Associates with MTA, MTB, FIP37 and HAKAI to form the m6A writer complex which is essential for adenosine methylation at specific mRNA sequences. N6-methyladenosine (m6A) plays a role in mRNA stability, processing, translation efficiency and editing. The polypeptide is Protein virilizer homolog (Arabidopsis thaliana (Mouse-ear cress)).